A 408-amino-acid chain; its full sequence is LL-diaminopimelate aminotransferase (408 aa).

Substrate is bound by residues tyrosine 15 and glycine 42. Pyridoxal 5'-phosphate is bound by residues tyrosine 72, 108–109 (SK), tyrosine 132, asparagine 187, tyrosine 218, and 246–248 (SFS). Residues lysine 109, tyrosine 132, and asparagine 187 each contribute to the substrate site. Lysine 249 carries the N6-(pyridoxal phosphate)lysine modification. Pyridoxal 5'-phosphate contacts are provided by arginine 257 and asparagine 292. Substrate contacts are provided by asparagine 292 and arginine 388.

It belongs to the class-I pyridoxal-phosphate-dependent aminotransferase family. LL-diaminopimelate aminotransferase subfamily. In terms of assembly, homodimer. The cofactor is pyridoxal 5'-phosphate.

The catalysed reaction is (2S,6S)-2,6-diaminopimelate + 2-oxoglutarate = (S)-2,3,4,5-tetrahydrodipicolinate + L-glutamate + H2O + H(+). It functions in the pathway amino-acid biosynthesis; L-lysine biosynthesis via DAP pathway; LL-2,6-diaminopimelate from (S)-tetrahydrodipicolinate (aminotransferase route): step 1/1. Its function is as follows. Involved in the synthesis of meso-diaminopimelate (m-DAP or DL-DAP), required for both lysine and peptidoglycan biosynthesis. Catalyzes the direct conversion of tetrahydrodipicolinate to LL-diaminopimelate. The polypeptide is LL-diaminopimelate aminotransferase (Synechococcus sp. (strain CC9902)).